Reading from the N-terminus, the 449-residue chain is Intestinal acid phosphatase (449 aa).

The signal sequence occupies residues 1–19; that stretch reads MVSAISIVAIFALEGFVTT. Topologically, residues 20-428 are extracellular; it reads YSDGTKDLVF…TDLNKSSSFA (409 aa). Catalysis depends on histidine 36, which acts as the Nucleophile. Aspartate 321 functions as the Proton donor in the catalytic mechanism. Residues 429–449 form a helical membrane-spanning segment; that stretch reads TVSMLFIAAILAINNNFLGLF.

This sequence belongs to the histidine acid phosphatase family. As to quaternary structure, homodimer. The N-terminus is blocked. In terms of tissue distribution, expressed in the intestine, specifically on the edge of the gut lumen, in the 14 posterior cells of the intestine.

It is found in the membrane. It carries out the reaction a phosphate monoester + H2O = an alcohol + phosphate. Functionally, acid phosphatase required for normal growth and development. Specifically required for normal gut differentiation. The protein is Intestinal acid phosphatase of Caenorhabditis elegans.